The primary structure comprises 339 residues: Tetraacyldisaccharide 4'-kinase (339 aa).

ATP is bound at residue 44–51 (TVGGTGKT).

Belongs to the LpxK family.

The catalysed reaction is a lipid A disaccharide + ATP = a lipid IVA + ADP + H(+). It functions in the pathway glycolipid biosynthesis; lipid IV(A) biosynthesis; lipid IV(A) from (3R)-3-hydroxytetradecanoyl-[acyl-carrier-protein] and UDP-N-acetyl-alpha-D-glucosamine: step 6/6. Functionally, transfers the gamma-phosphate of ATP to the 4'-position of a tetraacyldisaccharide 1-phosphate intermediate (termed DS-1-P) to form tetraacyldisaccharide 1,4'-bis-phosphate (lipid IVA). This Bdellovibrio bacteriovorus (strain ATCC 15356 / DSM 50701 / NCIMB 9529 / HD100) protein is Tetraacyldisaccharide 4'-kinase.